The primary structure comprises 154 residues: MTVEQKELGRADILEIMKLLPHRYPFLLVDRIIDIDGDNAAIGIKNVTANEPQFTGHFPEQPIMPGVLLIEGMAQTAGAICARKAGTAGDLVYFMTIDNARFRKPVVPGDRVEFHVTKQKQRGNVWKFHCDAKVDGALVAEADIGAMIVNKEAQ.

His-57 is a catalytic residue.

The protein belongs to the thioester dehydratase family. FabZ subfamily.

Its subcellular location is the cytoplasm. The enzyme catalyses a (3R)-hydroxyacyl-[ACP] = a (2E)-enoyl-[ACP] + H2O. In terms of biological role, involved in unsaturated fatty acids biosynthesis. Catalyzes the dehydration of short chain beta-hydroxyacyl-ACPs and long chain saturated and unsaturated beta-hydroxyacyl-ACPs. The sequence is that of 3-hydroxyacyl-[acyl-carrier-protein] dehydratase FabZ from Allorhizobium ampelinum (strain ATCC BAA-846 / DSM 112012 / S4) (Agrobacterium vitis (strain S4)).